We begin with the raw amino-acid sequence, 135 residues long: Insoluble matrix shell protein 5 (135 aa).

A signal peptide spans 1-16; it reads MILVVTLACLIAVVCC. EF-hand domains lie at 21–56 and 93–128; these read TDQG…ADLN and IEFV…TVRP. Residues Asp34, Asp36, Asn38, Lys40, Glu45, Asp106, Asn108, Asp110, Glu112, and Glu117 each contribute to the Ca(2+) site.

Component of the acid-insoluble organic matrix of the calcified shell.

It localises to the secreted. This Ruditapes philippinarum (Japanese carpet shell) protein is Insoluble matrix shell protein 5.